Here is a 991-residue protein sequence, read N- to C-terminus: Seizure protein 6 (991 aa).

Positions 1 to 19 are cleaved as a signal peptide; it reads MRPAALLLLPSLLALLAHG. Topologically, residues 20 to 922 are extracellular; the sequence is LSSEAPITGE…AASSALDAAH (903 aa). The interval 79–193 is disordered; it reads EGLEREEAPQ…QEGPGDMDRP (115 aa). Low complexity predominate over residues 119–132; sequence TSPTPAVAAAPTQP. A compositionally biased stretch (polar residues) spans 175–184; sequence PPSQAWTPTQ. Cys241 and Cys268 form a disulfide bridge. Positions 241–353 constitute a CUB 1 domain; that stretch reads CSWNFSGPEG…HFRYQAYLLS (113 aa). Asn286 is a glycosylation site (N-linked (GlcNAc...) asparagine). Residues 352–411 form the Sushi 1 domain; that stretch reads LSCHFPRRPAYGDVTVTSLHPGGSAHFHCATGYQLKGARFLTCLNATQPFWDSQEPVCIA. Cystine bridges form between Cys354/Cys394, Cys380/Cys409, Cys413/Cys440, Cys529/Cys571, Cys556/Cys586, Cys590/Cys616, Cys707/Cys749, Cys735/Cys762, Cys768/Cys810, Cys796/Cys827, Cys835/Cys877, and Cys863/Cys892. N-linked (GlcNAc...) asparagine glycans are attached at residues Asn396, Asn433, and Asn538. The CUB 2 domain maps to 413–524; the sequence is CGGVIRNATT…AGMALRYEAF (112 aa). The region spanning 527-588 is the Sushi 2 domain; sequence GHCYEPFVKY…WNETEPACRA (62 aa). The region spanning 590–701 is the CUB 3 domain; sequence CSGEITDSAG…QGFVIHFFEV (112 aa). 3 consecutive Sushi domains span residues 705–764, 766–829, and 833–894; these read DTCP…SCQR, TSCH…KCLL, and KPCH…ICRA. The helical transmembrane segment at 923–943 threads the bilayer; the sequence is LAAAIFLPLVAMVLLVGGVYL. Topologically, residues 944-991 are cytoplasmic; it reads YFSRFQGKSPLQLPRTHPRPYNRITVESAFDNPTYETGSLSFAGDERI.

It belongs to the SEZ6 family. In terms of processing, glycosylated. In terms of tissue distribution, brain-specific. Expressed in extrasynaptic and synaptic subcellular fractions (at protein level). Expression correlates with the most active periods of cortical neurogenesis and neuronal maturation. Expression is restricted to the gray matter with higher levels in the forebrain including the olfactory bulb, anterior olfactory nuclei, olfactory tubercle, striatum, hippocampal CA1 pyramidal cell layer and cerebral cortex. Expression is up-regulated with the convulsant drug, pentylenetetrazole.

It localises to the cell membrane. Its subcellular location is the cell projection. It is found in the dendrite. The protein resides in the synapse. The protein localises to the secreted. It localises to the cytoplasm. In terms of biological role, may play a role in cell-cell recognition and in neuronal membrane signaling. Seems to be important for the achievement of the necessary balance between dendrite elongation and branching during the elaboration of a complex dendritic arbor. Involved in the development of appropriate excitatory synaptic connectivity. The polypeptide is Seizure protein 6 (Sez6) (Mus musculus (Mouse)).